The sequence spans 463 residues: Argininosuccinate lyase (463 aa).

This sequence belongs to the lyase 1 family. Argininosuccinate lyase subfamily.

The protein resides in the cytoplasm. It carries out the reaction 2-(N(omega)-L-arginino)succinate = fumarate + L-arginine. It functions in the pathway amino-acid biosynthesis; L-arginine biosynthesis; L-arginine from L-ornithine and carbamoyl phosphate: step 3/3. In Prochlorococcus marinus (strain NATL2A), this protein is Argininosuccinate lyase.